A 201-amino-acid chain; its full sequence is Recombination protein RecR (201 aa).

The C4-type zinc finger occupies 57 to 72 (CADCRTFTEQEHCTIC). In terms of domain architecture, Toprim spans 81 to 176 (GQICVVESPA…LASRIAHGVP (96 aa)).

This sequence belongs to the RecR family.

May play a role in DNA repair. It seems to be involved in an RecBC-independent recombinational process of DNA repair. It may act with RecF and RecO. The polypeptide is Recombination protein RecR (Yersinia enterocolitica serotype O:8 / biotype 1B (strain NCTC 13174 / 8081)).